The sequence spans 380 residues: tRNA-specific 2-thiouridylase MnmA (380 aa).

Residues Ala6–Ser13 and Met32 contribute to the ATP site. The active-site Nucleophile is the Cys101. Cys101 and Cys199 are disulfide-bonded. Position 125 (Gly125) interacts with ATP. Positions Lys148–Gln150 are interaction with tRNA. The active-site Cysteine persulfide intermediate is the Cys199.

Belongs to the MnmA/TRMU family.

It is found in the cytoplasm. It catalyses the reaction S-sulfanyl-L-cysteinyl-[protein] + uridine(34) in tRNA + AH2 + ATP = 2-thiouridine(34) in tRNA + L-cysteinyl-[protein] + A + AMP + diphosphate + H(+). In terms of biological role, catalyzes the 2-thiolation of uridine at the wobble position (U34) of tRNA, leading to the formation of s(2)U34. The chain is tRNA-specific 2-thiouridylase MnmA from Beutenbergia cavernae (strain ATCC BAA-8 / DSM 12333 / CCUG 43141 / JCM 11478 / NBRC 16432 / NCIMB 13614 / HKI 0122).